Here is a 255-residue protein sequence, read N- to C-terminus: Small ribosomal subunit protein eS1B (255 aa).

The residue at position 2 (alanine 2) is an N-acetylalanine; partial. Serine 245 is subject to Phosphoserine. Residue lysine 248 forms a Glycyl lysine isopeptide (Lys-Gly) (interchain with G-Cter in ubiquitin) linkage. Phosphothreonine is present on threonine 254.

This sequence belongs to the eukaryotic ribosomal protein eS1 family. In terms of assembly, component of the small ribosomal subunit. Mature ribosomes consist of a small (40S) and a large (60S) subunit. The 40S subunit contains about 33 different proteins and 1 molecule of RNA (18S). The 60S subunit contains about 49 different proteins and 3 molecules of RNA (25S, 5.8S and 5S).

Its subcellular location is the cytoplasm. The sequence is that of Small ribosomal subunit protein eS1B from Saccharomyces cerevisiae (strain JAY291) (Baker's yeast).